The sequence spans 288 residues: Phosphatidate cytidylyltransferase (288 aa).

7 consecutive transmembrane segments (helical) span residues 10-30, 52-72, 89-109, 118-138, 152-172, 192-212, and 223-243; these read IVLIAAVLCALFLFTPFYFAL, PLIRFFVTTFLGVFIFLWLYT, LLLINAVSWWGLALLLVISYP, NPLLQLLFAFSTLIPFVAGVL, GLFLLLYVFILVWAADSGAYF, WEGVIGGLITALVLAFIFIHF, and ITGFIILSVATVAISVLGDLT.

The protein belongs to the CDS family.

It localises to the cell inner membrane. It catalyses the reaction a 1,2-diacyl-sn-glycero-3-phosphate + CTP + H(+) = a CDP-1,2-diacyl-sn-glycerol + diphosphate. It participates in phospholipid metabolism; CDP-diacylglycerol biosynthesis; CDP-diacylglycerol from sn-glycerol 3-phosphate: step 3/3. The polypeptide is Phosphatidate cytidylyltransferase (cdsA) (Haemophilus influenzae (strain ATCC 51907 / DSM 11121 / KW20 / Rd)).